We begin with the raw amino-acid sequence, 238 residues long: Fish-egg lectin (238 aa).

Repeat copies occupy residues 1–34 (LDCT…VLID), 35–68 (NVFT…KYQS), 69–106 (GGFV…MDAN), 107–156 (NKWP…CSGS), and 157–199 (GSFI…KPDG). A 5 X approximate tandem repeats region spans residues 1–199 (LDCTVIDGNL…TGVTRSKPDG (199 aa)). 4 disulfides stabilise this stretch: cysteine 3–cysteine 234, cysteine 100–cysteine 153, cysteine 128–cysteine 133, and cysteine 208–cysteine 226. Asparagine 27 carries an N-linked (GlcNAc...) asparagine glycan.

It belongs to the tectonin family. Expressed in the eggs.

Its subcellular location is the secreted. Lipopolysaccharide-binding protein with a very low agglutinating activity for human A-type erythrocytes and interacts with both Gram-positive and Gram-negative bacteria. The chain is Fish-egg lectin from Cyprinus carpio (Common carp).